A 58-amino-acid polypeptide reads, in one-letter code: Photosystem II reaction center X protein (58 aa).

The chain crosses the membrane as a helical span at residues 27–47 (IGSFLAAAAFIVVPAASFLIW).

It belongs to the PsbX family. Type 2 subfamily. In terms of assembly, PSII consists of a core antenna complex that captures photons, and an electron transfer chain that converts photonic excitation into a charge separation. PSII forms dimeric complexes.

The protein localises to the cellular thylakoid membrane. Its function is as follows. Involved in the binding and/or turnover of quinones at the Q(B) site of Photosystem II. The polypeptide is Photosystem II reaction center X protein (Prochlorococcus marinus (strain MIT 9211)).